The primary structure comprises 81 residues: Short neurotoxin 2 (81 aa).

Positions 1-21 are cleaved as a signal peptide; that stretch reads MKTLLLTLVVVTIVCLDLGYT. Disulfide bonds link Cys-24-Cys-43, Cys-38-Cys-60, Cys-62-Cys-73, and Cys-74-Cys-79.

The protein belongs to the three-finger toxin family. Short-chain subfamily. Type I alpha-neurotoxin sub-subfamily. Expressed by the venom gland.

Its subcellular location is the secreted. Its function is as follows. Binds to muscle nicotinic acetylcholine receptor (nAChR) and inhibit acetylcholine from binding to the receptor, thereby impairing neuromuscular transmission. This Hydrophis peronii (Spiny-headed seasnake) protein is Short neurotoxin 2.